Here is a 712-residue protein sequence, read N- to C-terminus: MKRFFKMALFLGVSALYGQQGGMWIPSLLEGMNAKEMKTLGMKMTVADIYSVNKSSLKDAAPHFNGGCSSEVISDKGLLLTNHHCGYGQIQAHSTLQNDYLANGFWAKSLAEELPNKNLKVTFMVRIDDVTKQVLKGTESITDETEKAKLIEKNIAEVIKTAPKEAWQENSVKAFYDGNQYILFVTETFKDVRLVGAPPSSIGKFGSDTDNWVWPRHTGDFSLFRIYADKNNRPAEYSKDNVPYKPKHFFPISLKGVKEGDFVLVFGYPGTTQEYLPSAAVAQIENVINPARIGIRDIVLKVQDSYMRKDQGIKIKYAAKYARVANYWKKWMGETKGLKKSGAVALKQQQEAKFQQAIQKANKQAQYGNLLSDFNRLYKEIEPYTLAANLNSEFIFRNIDLLSNGSRLLQLEKALEDKGEQSFNDRKKNLLNTFKEIFKDNDKQVDKDVFEKVVVFYAANMPKNLLINSLKNFDAKKLADNLYNNSFLTSLSGVESVLNLSAAEFKERMKNDVGIQFVRELKEMNDTQVFPVYDRLNTQIHALQRTYMKAILEFSKPSDRIFPDANGTLRVTYGKVAGFSPADAVTYSAHTTLDGVMEKYVPGDYEFDVPQHLRDLQAKKDFGRYGDKNGKMPLCFLSTCHTTGGNSGSPAIDANGNLIGLNFDRVWEGTMSDIHYDPKLCRNIMVDIRYVLFVIDKYAGAGHLVNEMKLIK.

An N-terminal signal peptide occupies residues 1–18; it reads MKRFFKMALFLGVSALYG. Active-site charge relay system residues include His84, Asp220, and Ser647.

Belongs to the peptidase S46 family.

Catalyzes the removal of dipeptides from the N-terminus of oligopeptides. Shows a strict specificity for acidic residues (Asp or Glu) in the P1 position, and has probably a hydrophobic residue preference at the P2 position. Preferentially cleaves the synthetic substrate Leu-Asp-methylcoumaryl-7-amide (Leu-Asp-MCA) as compared to Leu-Glu-MCA. In Capnocytophaga gingivalis, this protein is Asp/Glu-specific dipeptidyl-peptidase (dpp11).